Here is a 305-residue protein sequence, read N- to C-terminus: tRNA-splicing endonuclease (305 aa).

Active-site residues include Tyr246, His257, and Lys287.

It belongs to the tRNA-intron endonuclease family. Archaeal long subfamily. In terms of assembly, homodimer.

It catalyses the reaction pretRNA = a 3'-half-tRNA molecule with a 5'-OH end + a 5'-half-tRNA molecule with a 2',3'-cyclic phosphate end + an intron with a 2',3'-cyclic phosphate and a 5'-hydroxyl terminus.. Its function is as follows. Endonuclease that removes tRNA introns. Cleaves pre-tRNA at the 5'- and 3'-splice sites to release the intron. The products are an intron and two tRNA half-molecules bearing 2',3' cyclic phosphate and 5'-OH termini. Recognizes a pseudosymmetric substrate in which 2 bulged loops of 3 bases are separated by a stem of 4 bp. This Archaeoglobus fulgidus (strain ATCC 49558 / DSM 4304 / JCM 9628 / NBRC 100126 / VC-16) protein is tRNA-splicing endonuclease.